The primary structure comprises 185 residues: MKICGIDEAGRGPLAGPLHIAGCILNKQIEGLKDSKKLSEKRREILYEEIIKNSTYKIVKFSAAQIDKFGLSKCLKLGLNELVDFFAPFEVKIIFDGNSKFGAEGFETMVKADDKIKEVSAASILAKVSRDRVMRNFDIKFPFYDFAKNKGYGSKAHIEAIQKYGYCEIHRKSFHLKHLQGILEF.

One can recognise an RNase H type-2 domain in the interval 1–185 (MKICGIDEAG…LKHLQGILEF (185 aa)). Residues D7, E8, and D96 each contribute to the a divalent metal cation site.

It belongs to the RNase HII family. Mn(2+) serves as cofactor. Mg(2+) is required as a cofactor.

It localises to the cytoplasm. It carries out the reaction Endonucleolytic cleavage to 5'-phosphomonoester.. Functionally, endonuclease that specifically degrades the RNA of RNA-DNA hybrids. This chain is Ribonuclease HII, found in Campylobacter hominis (strain ATCC BAA-381 / DSM 21671 / CCUG 45161 / LMG 19568 / NCTC 13146 / CH001A).